A 365-amino-acid polypeptide reads, in one-letter code: Phosphatidylcholine:ceramide cholinephosphotransferase 2 (365 aa).

Positions 9–50 (LEGHLESQTNDSTNTYTSPTEAVEEEGKNGKGKPKTLSNGLR) are disordered. A compositionally biased stretch (polar residues) spans 14–28 (ESQTNDSTNTYTSPT). Helical transmembrane passes span 80–100 (GIAF…ITVV), 128–148 (FSVS…QWLF), 159–179 (FFFI…VTTL), 219–239 (ILCG…TYLF), and 248–268 (FWWY…CILV). The active site involves histidine 229. Catalysis depends on residues histidine 272 and aspartate 276. A helical membrane pass occupies residues 273 to 290 (YTVDVIIAYYITTRLFWW). Over 291-365 (YHSMANEKNL…KIGEDNEKST (75 aa)) the chain is Cytoplasmic. 4 S-palmitoyl cysteine lipidation sites follow: cysteine 331, cysteine 332, cysteine 343, and cysteine 348.

The protein belongs to the sphingomyelin synthase family. In terms of processing, palmitoylated on Cys-331, Cys-332, Cys-343 and Cys-348; which plays an important role in plasma membrane localization. Highest expression is detected in cortical bone, followed by vertebrae, kidney and liver. Expression levels are very low in spleen, muscle, heart, brown fat and thymus. Expressed in macrophages.

The protein localises to the cell membrane. The protein resides in the golgi apparatus membrane. The enzyme catalyses an N-acylsphing-4-enine + a 1,2-diacyl-sn-glycero-3-phosphocholine = a sphingomyelin + a 1,2-diacyl-sn-glycerol. The catalysed reaction is an N-acylsphinganine + a 1,2-diacyl-sn-glycero-3-phosphocholine = an N-acylsphinganine-1-phosphocholine + a 1,2-diacyl-sn-glycerol. It catalyses the reaction an N-acyl-(4R)-4-hydroxysphinganine + a 1,2-diacyl-sn-glycero-3-phosphocholine = an N-acyl-(4R)-4-hydroxysphinganine-phosphocholine + a 1,2-diacyl-sn-glycerol. It carries out the reaction an N-acylsphing-4-enine + a 1,2-diacyl-sn-glycero-3-phosphoethanolamine = an N-acylsphing-4-enine 1-phosphoethanolamine + a 1,2-diacyl-sn-glycerol. The enzyme catalyses an N-acylsphinganine + a 1,2-diacyl-sn-glycero-3-phosphoethanolamine = an N-acylsphinganine-1-phosphoethanolamine + a 1,2-diacyl-sn-glycerol. The catalysed reaction is an N-acyl-(4R)-4-hydroxysphinganine + a 1,2-diacyl-sn-glycero-3-phosphoethanolamine = an N-acyl-(4R)-4-hydroxysphinganine-1-phosphoethanolamine + a 1,2-diacyl-sn-glycerol. It catalyses the reaction 1,2-dihexadecanoyl-sn-glycero-3-phosphocholine + an N-acylsphing-4-enine = 1,2-dihexadecanoyl-sn-glycerol + a sphingomyelin. It carries out the reaction 1-(9Z-octadecenoyl)-2-acyl-sn-3-glycerol + a sphingomyelin = a 1-(9Z-octadecenoyl)-2-acyl-sn-glycero-3-phosphocholine + an N-acylsphing-4-enine. The enzyme catalyses N-hexadecanoylsphinganine + a 1,2-diacyl-sn-glycero-3-phosphocholine = N-hexadecanoyl-sphinganine-1-phosphocholine + a 1,2-diacyl-sn-glycerol. The catalysed reaction is N-hexadecanoyl-(4R)-hydroxysphinganine + a 1,2-diacyl-sn-glycero-3-phosphocholine = N-hexadecanoyl-(4R)-hydroxysphinganine-phosphocholine + a 1,2-diacyl-sn-glycerol. It catalyses the reaction N-hexadecanoylsphinganine + a 1,2-diacyl-sn-glycero-3-phosphoethanolamine = N-hexadecanoyl-sphinganine-1-phosphoethanolamine + a 1,2-diacyl-sn-glycerol. It carries out the reaction N-hexadecanoyl-(4R)-hydroxysphinganine + a 1,2-diacyl-sn-glycero-3-phosphoethanolamine = N-hexadecanoyl-(4R)-hydroxysphinganine-1-phosphoethanolamine + a 1,2-diacyl-sn-glycerol. Its pathway is sphingolipid metabolism. In terms of biological role, sphingomyelin synthase that primarily contributes to sphingomyelin synthesis and homeostasis at the plasma membrane. Catalyzes the reversible transfer of phosphocholine moiety in sphingomyelin biosynthesis: in the forward reaction transfers phosphocholine head group of phosphatidylcholine (PC) on to ceramide (CER) to form ceramide phosphocholine (sphingomyelin, SM) and diacylglycerol (DAG) as by-product, and in the reverse reaction transfers phosphocholine from SM to DAG to form PC and CER. The direction of the reaction appears to depend on the levels of CER and DAG in the plasma membrane. Does not use free phosphorylcholine or CDP-choline as donors. Can also transfer phosphoethanolamine head group of phosphatidylethanolamine (PE) on to ceramide (CER) to form ceramide phosphoethanolamine (CPE). Regulates receptor-mediated signal transduction via mitogenic DAG and proapoptotic CER, as well as via SM, a structural component of membrane rafts that serve as platforms for signal transduction and protein sorting. To a lesser extent, plays a role in secretory transport via regulation of DAG pool at the Golgi apparatus and its downstream effects on PRKD1. Required for normal bone matrix mineralization. The sequence is that of Phosphatidylcholine:ceramide cholinephosphotransferase 2 (Sgms2) from Mus musculus (Mouse).